A 347-amino-acid chain; its full sequence is MGKIHRPRRGSLAYSPRKRAKSIVPRIRKWPKDSEVRMLGFAGYKAGMTHILMIDDRPGLTKGKEIFMPVTVVEVPPLFVYGIRAYRQGYLGLETATEVWFHELNDYVKRRIKTLPKDYNEEAFQAKLGQLEDLVNDGEIVDVRLLVHTQPWLIKLKKKPEVMEYAIGGDDVKAKFDYAKEKIGKELRASEVLHEGELLDVIAVTKGKGTQGPVKRWGIKIQFHKAQRAGKGRHVGNLGPWHPTRVMWTVPQAGQMGFHHRTEFNKRLIAIGENGKLKLDEKNEIEITPKGGFPHYGIIRSDFLMIQGTIPGSFKRIIRVRPAIRPPKKKPPVERPQITYISRESKQ.

Positions 325 to 347 (RPPKKKPPVERPQITYISRESKQ) are disordered.

It belongs to the universal ribosomal protein uL3 family. Part of the 50S ribosomal subunit. Forms a cluster with proteins L14 and L24e.

Its function is as follows. One of the primary rRNA binding proteins, it binds directly near the 3'-end of the 23S rRNA, where it nucleates assembly of the 50S subunit. This is Large ribosomal subunit protein uL3 from Thermococcus onnurineus (strain NA1).